Consider the following 238-residue polypeptide: Probable transcriptional regulatory protein SUB0364 (238 aa).

Belongs to the TACO1 family. YeeN subfamily.

It localises to the cytoplasm. In Streptococcus uberis (strain ATCC BAA-854 / 0140J), this protein is Probable transcriptional regulatory protein SUB0364.